We begin with the raw amino-acid sequence, 116 residues long: Cocaine- and amphetamine-regulated transcript protein (116 aa).

Positions 1-27 are cleaved as a signal peptide; sequence MESSRVRLLPLLGAALLLMLPLLGTRA. The residue at position 41 (Y41) is a Phosphotyrosine. A Phosphoserine modification is found at S48. 3 cysteine pairs are disulfide-bonded: C82-C100, C88-C108, and C102-C115.

This sequence belongs to the CART family. Hypothalamus. Found in neurons of the ventrolateral part of the arcuate nucleus, in the external zone of the median eminence, and also found in terminals in the periventricular part of the paraventricular nucleus.

It is found in the secreted. In terms of biological role, satiety factor closely associated with the actions of leptin and neuropeptide Y; this anorectic peptide inhibits both normal and starvation-induced feeding and completely blocks the feeding response induced by neuropeptide Y and regulated by leptin in the hypothalamus. It promotes neuronal development and survival in vitro. In Homo sapiens (Human), this protein is Cocaine- and amphetamine-regulated transcript protein (CARTPT).